The sequence spans 124 residues: Small ribosomal subunit protein bS6 (124 aa).

Residues 97–124 (EQGPSAMMRRGDRDRSNRSDRRRDRDAA) form a disordered region. The span at 105 to 124 (RRGDRDRSNRSDRRRDRDAA) shows a compositional bias: basic and acidic residues.

It belongs to the bacterial ribosomal protein bS6 family.

Binds together with bS18 to 16S ribosomal RNA. The polypeptide is Small ribosomal subunit protein bS6 (Zymomonas mobilis subsp. mobilis (strain ATCC 31821 / ZM4 / CP4)).